Reading from the N-terminus, the 364-residue chain is MKLSLFSTFAAVIIGALALPQGPGGGGGSVTCPGGQSTSNSQCCVWFDVLDDLQTNFYQGSKCESPVRKILRIVFHDAIGFSPALTAAGQFGGGGADGSIIAHSNIELAFPANGGLTDTIEALRAVGINHGVSFGDLIQFATAVGMSNCPGSPRLEFLTGRSNSSQPSPPSLIPGPGNTVTAILDRMGDAGFSPDEVVDLLAAHSLASQEGLNSAIFRSPLDSTPQVFDTQFYIETLLKGTTQPGPSLGFAEELSPFPGEFRMRSDALLARDSRTACRWQSMTSSNEVMGQRYRAAMAKMSVLGFDRNALTDCSDVIPSAVSNNAAPVIPGGLTVDDIEVSCPSEPFPEIATASGPLPSLAPAP.

A signal peptide spans 1 to 20 (MKLSLFSTFAAVIIGALALP). The residue at position 21 (glutamine 21) is a Pyrrolidone carboxylic acid. Cystine bridges form between cysteine 32-cysteine 44, cysteine 43-cysteine 313, cysteine 63-cysteine 149, and cysteine 277-cysteine 342. Histidine 76 (proton acceptor) is an active-site residue. Positions 77, 95, 97, and 99 each coordinate Ca(2+). Asparagine 163 carries N-linked (GlcNAc...) (high mannose) asparagine glycosylation. Position 204 (histidine 204) interacts with heme b. The Ca(2+) site is built by serine 205, aspartate 222, threonine 224, valine 227, and aspartate 229.

Belongs to the peroxidase family. Ligninase subfamily. Requires Ca(2+) as cofactor. The cofactor is heme b.

The protein resides in the secreted. It carries out the reaction 2 a phenolic donor + H2O2 = 2 a phenolic radical donor + 2 H2O. In Arthromyces ramosus, this protein is Peroxidase.